The primary structure comprises 187 residues: Large ribosomal subunit protein eL18x (187 aa).

The segment at 150–187 (HFGPAPGVPHSNTKPYVRHKGRKFEKARGKRKSRGFKV) is disordered. Over residues 165–187 (YVRHKGRKFEKARGKRKSRGFKV) the composition is skewed to basic residues.

The protein belongs to the eukaryotic ribosomal protein eL18 family.

The sequence is that of Large ribosomal subunit protein eL18x (RPL18C) from Arabidopsis thaliana (Mouse-ear cress).